The following is a 148-amino-acid chain: Large ribosomal subunit protein bL9 (148 aa).

The protein belongs to the bacterial ribosomal protein bL9 family.

Binds to the 23S rRNA. The protein is Large ribosomal subunit protein bL9 of Bifidobacterium adolescentis (strain ATCC 15703 / DSM 20083 / NCTC 11814 / E194a).